A 391-amino-acid polypeptide reads, in one-letter code: D-xylose 1-dehydrogenase (NADP(+)) (391 aa).

It belongs to the Gfo/Idh/MocA family.

The enzyme catalyses D-xylose + NADP(+) = D-xylono-1,5-lactone + NADPH + H(+). NADP-dependent D-xylose dehydrogenase catalyzing the oxydation of D-xylose into D-xylonolactone. Also displays some, albeit lower activity with D-glucose, D-galactose and L-arabinose as substrate. Probably not involved in D-xylose degradation, as it has been shown that H.jecorina assimilates D-xylose via D-xylose reductase and xylitol dehydrogenase, and it is unable to grow on D-xylonic acid as sole carbon source. May play a role in the regeneration of NADP(+) in the presence of D-xylose. In Hypocrea jecorina (strain ATCC 56765 / BCRC 32924 / NRRL 11460 / Rut C-30) (Trichoderma reesei), this protein is D-xylose 1-dehydrogenase (NADP(+)).